The sequence spans 510 residues: ATP synthase subunit alpha (510 aa).

169 to 176 contributes to the ATP binding site; that stretch reads GDRQTGKT.

Belongs to the ATPase alpha/beta chains family. As to quaternary structure, F-type ATPases have 2 components, CF(1) - the catalytic core - and CF(0) - the membrane proton channel. CF(1) has five subunits: alpha(3), beta(3), gamma(1), delta(1), epsilon(1). CF(0) has three main subunits: a(1), b(2) and c(9-12). The alpha and beta chains form an alternating ring which encloses part of the gamma chain. CF(1) is attached to CF(0) by a central stalk formed by the gamma and epsilon chains, while a peripheral stalk is formed by the delta and b chains.

The protein resides in the cell inner membrane. The catalysed reaction is ATP + H2O + 4 H(+)(in) = ADP + phosphate + 5 H(+)(out). Produces ATP from ADP in the presence of a proton gradient across the membrane. The alpha chain is a regulatory subunit. The protein is ATP synthase subunit alpha of Rickettsia rickettsii (strain Iowa).